A 534-amino-acid polypeptide reads, in one-letter code: CTP synthase (534 aa).

Residues 1–267 (MTKYIFVTGG…DQIVCDHLKL (267 aa)) form an amidoligase domain region. Serine 13 lines the CTP pocket. Serine 13 lines the UTP pocket. Residue 14-19 (SIGKGI) participates in ATP binding. Tyrosine 54 is a binding site for L-glutamine. Aspartate 71 is a binding site for ATP. Residues aspartate 71 and glutamate 141 each coordinate Mg(2+). Residues 148–150 (DIE), 188–193 (KTKPTQ), and lysine 224 contribute to the CTP site. UTP is bound by residues 188–193 (KTKPTQ) and lysine 224. One can recognise a Glutamine amidotransferase type-1 domain in the interval 292–534 (KIALVGKYVE…FVTAAVENMK (243 aa)). Glycine 354 serves as a coordination point for L-glutamine. Catalysis depends on cysteine 381, which acts as the Nucleophile; for glutamine hydrolysis. L-glutamine contacts are provided by residues 382 to 385 (LGMQ), glutamate 405, and arginine 463. Residues histidine 508 and glutamate 510 contribute to the active site.

It belongs to the CTP synthase family. As to quaternary structure, homotetramer.

It carries out the reaction UTP + L-glutamine + ATP + H2O = CTP + L-glutamate + ADP + phosphate + 2 H(+). It catalyses the reaction L-glutamine + H2O = L-glutamate + NH4(+). The enzyme catalyses UTP + NH4(+) + ATP = CTP + ADP + phosphate + 2 H(+). Its pathway is pyrimidine metabolism; CTP biosynthesis via de novo pathway; CTP from UDP: step 2/2. With respect to regulation, allosterically activated by GTP, when glutamine is the substrate; GTP has no effect on the reaction when ammonia is the substrate. The allosteric effector GTP functions by stabilizing the protein conformation that binds the tetrahedral intermediate(s) formed during glutamine hydrolysis. Inhibited by the product CTP, via allosteric rather than competitive inhibition. In terms of biological role, catalyzes the ATP-dependent amination of UTP to CTP with either L-glutamine or ammonia as the source of nitrogen. Regulates intracellular CTP levels through interactions with the four ribonucleotide triphosphates. This is CTP synthase from Streptococcus agalactiae serotype Ia (strain ATCC 27591 / A909 / CDC SS700).